A 308-amino-acid chain; its full sequence is Porphobilinogen deaminase (308 aa).

Residue C243 is modified to S-(dipyrrolylmethanemethyl)cysteine.

The protein belongs to the HMBS family. As to quaternary structure, monomer. Requires dipyrromethane as cofactor.

It carries out the reaction 4 porphobilinogen + H2O = hydroxymethylbilane + 4 NH4(+). Its pathway is porphyrin-containing compound metabolism; protoporphyrin-IX biosynthesis; coproporphyrinogen-III from 5-aminolevulinate: step 2/4. Functionally, tetrapolymerization of the monopyrrole PBG into the hydroxymethylbilane pre-uroporphyrinogen in several discrete steps. In Mesorhizobium japonicum (strain LMG 29417 / CECT 9101 / MAFF 303099) (Mesorhizobium loti (strain MAFF 303099)), this protein is Porphobilinogen deaminase.